We begin with the raw amino-acid sequence, 250 residues long: Ubiquinone/menaquinone biosynthesis C-methyltransferase UbiE (250 aa).

S-adenosyl-L-methionine is bound by residues Thr73, Asp94, 122–123 (NA), and Ser139.

Belongs to the class I-like SAM-binding methyltransferase superfamily. MenG/UbiE family.

The catalysed reaction is a 2-demethylmenaquinol + S-adenosyl-L-methionine = a menaquinol + S-adenosyl-L-homocysteine + H(+). It carries out the reaction a 2-methoxy-6-(all-trans-polyprenyl)benzene-1,4-diol + S-adenosyl-L-methionine = a 5-methoxy-2-methyl-3-(all-trans-polyprenyl)benzene-1,4-diol + S-adenosyl-L-homocysteine + H(+). Its pathway is quinol/quinone metabolism; menaquinone biosynthesis; menaquinol from 1,4-dihydroxy-2-naphthoate: step 2/2. The protein operates within cofactor biosynthesis; ubiquinone biosynthesis. Methyltransferase required for the conversion of demethylmenaquinol (DMKH2) to menaquinol (MKH2) and the conversion of 2-polyprenyl-6-methoxy-1,4-benzoquinol (DDMQH2) to 2-polyprenyl-3-methyl-6-methoxy-1,4-benzoquinol (DMQH2). This is Ubiquinone/menaquinone biosynthesis C-methyltransferase UbiE from Francisella tularensis subsp. mediasiatica (strain FSC147).